Here is a 651-residue protein sequence, read N- to C-terminus: Acetyl-coenzyme A synthetase (651 aa).

CoA-binding positions include 189–192 (RGGK), Thr-311, and Asn-335. ATP is bound by residues 387–389 (GEP), 411–416 (DTWWQT), Asp-500, and Arg-515. CoA is bound at residue Ser-523. Residue Arg-526 participates in ATP binding. Positions 537, 539, and 542 each coordinate Mg(2+). Residue Arg-586 participates in CoA binding. N6-acetyllysine is present on Lys-611.

It belongs to the ATP-dependent AMP-binding enzyme family. Mg(2+) serves as cofactor. Acetylated. Deacetylation by the SIR2-homolog deacetylase activates the enzyme.

It catalyses the reaction acetate + ATP + CoA = acetyl-CoA + AMP + diphosphate. Its function is as follows. Catalyzes the conversion of acetate into acetyl-CoA (AcCoA), an essential intermediate at the junction of anabolic and catabolic pathways. AcsA undergoes a two-step reaction. In the first half reaction, AcsA combines acetate with ATP to form acetyl-adenylate (AcAMP) intermediate. In the second half reaction, it can then transfer the acetyl group from AcAMP to the sulfhydryl group of CoA, forming the product AcCoA. This Brucella anthropi (strain ATCC 49188 / DSM 6882 / CCUG 24695 / JCM 21032 / LMG 3331 / NBRC 15819 / NCTC 12168 / Alc 37) (Ochrobactrum anthropi) protein is Acetyl-coenzyme A synthetase.